Reading from the N-terminus, the 270-residue chain is MMSLIVKDLQRYPFHLVDPSPWPFVASFSALIILLGGVLYFHTYQGSLVILFFGIFFLLLIIFVWWRDVVRESTFEGNHTTMVQLGMRYGIMLFIFSEVILFIAFFWAFFHNSLIPALETGVVWPPKGIQFFSPWDIPFLNTIILLLSGCAVTWSHNCIISGFRRQAIFSLILTIGLALIFTIFQIYEYAIASFHLSDGAYGSTFFMITGLHGFHVIVGTFFLFVCMFRLVQYHFTMQHHYGFEAATWYWHFVDVVWLFLFVSIYWWGSF.

The next 7 membrane-spanning stretches (helical) occupy residues 21-41 (PWPF…VLYF), 46-66 (GSLV…FVWW), 90-110 (GIML…WAFF), 131-151 (FFSP…SGCA), 167-187 (AIFS…FQIY), 205-225 (FFMI…FLFV), and 248-268 (WYWH…YWWG).

It belongs to the cytochrome c oxidase subunit 3 family. In terms of assembly, component of the cytochrome c oxidase (complex IV, CIV), a multisubunit enzyme composed of a catalytic core of 3 subunits and several supernumerary subunits. The complex exists as a monomer or a dimer and forms supercomplexes (SCs) in the inner mitochondrial membrane with ubiquinol-cytochrome c oxidoreductase (cytochrome b-c1 complex, complex III, CIII).

It localises to the mitochondrion inner membrane. It catalyses the reaction 4 Fe(II)-[cytochrome c] + O2 + 8 H(+)(in) = 4 Fe(III)-[cytochrome c] + 2 H2O + 4 H(+)(out). Functionally, component of the cytochrome c oxidase, the last enzyme in the mitochondrial electron transport chain which drives oxidative phosphorylation. The respiratory chain contains 3 multisubunit complexes succinate dehydrogenase (complex II, CII), ubiquinol-cytochrome c oxidoreductase (cytochrome b-c1 complex, complex III, CIII) and cytochrome c oxidase (complex IV, CIV), that cooperate to transfer electrons derived from NADH and succinate to molecular oxygen, creating an electrochemical gradient over the inner membrane that drives transmembrane transport and the ATP synthase. Cytochrome c oxidase is the component of the respiratory chain that catalyzes the reduction of oxygen to water. Electrons originating from reduced cytochrome c in the intermembrane space (IMS) are transferred via the dinuclear copper A center (CU(A)) of subunit 2 and heme A of subunit 1 to the active site in subunit 1, a binuclear center (BNC) formed by heme A3 and copper B (CU(B)). The BNC reduces molecular oxygen to 2 water molecules using 4 electrons from cytochrome c in the IMS and 4 protons from the mitochondrial matrix. This chain is Cytochrome c oxidase subunit 3 (COX3), found in Cyanidium caldarium (Red alga).